We begin with the raw amino-acid sequence, 61 residues long: Small ribosomal subunit protein uS14B (61 aa).

The Zn(2+) site is built by Cys-24, Cys-27, Cys-40, and Cys-43.

This sequence belongs to the universal ribosomal protein uS14 family. Zinc-binding uS14 subfamily. In terms of assembly, part of the 30S ribosomal subunit. Contacts proteins S3 and S10. Requires Zn(2+) as cofactor.

Functionally, binds 16S rRNA, required for the assembly of 30S particles and may also be responsible for determining the conformation of the 16S rRNA at the A site. The sequence is that of Small ribosomal subunit protein uS14B from Cutibacterium acnes (strain DSM 16379 / KPA171202) (Propionibacterium acnes).